Reading from the N-terminus, the 179-residue chain is Large ribosomal subunit protein uL5 (179 aa).

It belongs to the universal ribosomal protein uL5 family. As to quaternary structure, part of the 50S ribosomal subunit; part of the 5S rRNA/L5/L18/L25 subcomplex. Contacts the 5S rRNA and the P site tRNA. Forms a bridge to the 30S subunit in the 70S ribosome.

Its function is as follows. This is one of the proteins that bind and probably mediate the attachment of the 5S RNA into the large ribosomal subunit, where it forms part of the central protuberance. In the 70S ribosome it contacts protein S13 of the 30S subunit (bridge B1b), connecting the 2 subunits; this bridge is implicated in subunit movement. Contacts the P site tRNA; the 5S rRNA and some of its associated proteins might help stabilize positioning of ribosome-bound tRNAs. This Burkholderia multivorans (strain ATCC 17616 / 249) protein is Large ribosomal subunit protein uL5.